The primary structure comprises 356 residues: Protein ATP1B4 (356 aa).

Topologically, residues 1-109 (MRRQLRSRRA…SLARTGQSRS (109 aa)) are nuclear. Positions 26–78 (EANHNYLADEEEEAEEEAQVMMVPGLEEEEEEEEGKEEEEEREEEEGQGQSTG) are disordered. Composition is skewed to acidic residues over residues 33 to 43 (ADEEEEAEEEA) and 51 to 72 (LEEE…EEEG). Residues 110-130 (LILVIYFFFYASLAAVITLFI) form a helical; Signal-anchor for type II membrane protein membrane-spanning segment. The Perinuclear space segment spans residues 131-356 (YMLFLAISPY…RIIFTLNIET (226 aa)).

The protein belongs to the X(+)/potassium ATPases subunit beta family. In terms of assembly, associates with a SMAD7-transcriptional complex. Interacts with TOR1AIP1. Does not associate with known Na,K-ATPase alpha-subunits. Interacts with SNW1. As to expression, expressed in skeletal muscle (at protein level). Expressed during postnatal development in skeletal muscle and heart.

The protein localises to the nucleus inner membrane. May act as a transcriptional coregulator during muscle development through its interaction with SNW1. Has lost its ancestral function as a Na,K-ATPase beta-subunit. This chain is Protein ATP1B4 (Atp1b4), found in Mus musculus (Mouse).